The following is a 315-amino-acid chain: Homoserine kinase (315 aa).

Pro97 to Thr107 contacts ATP.

Belongs to the GHMP kinase family. Homoserine kinase subfamily.

The protein resides in the cytoplasm. The enzyme catalyses L-homoserine + ATP = O-phospho-L-homoserine + ADP + H(+). The protein operates within amino-acid biosynthesis; L-threonine biosynthesis; L-threonine from L-aspartate: step 4/5. Catalyzes the ATP-dependent phosphorylation of L-homoserine to L-homoserine phosphate. The sequence is that of Homoserine kinase from Parasynechococcus marenigrum (strain WH8102).